The primary structure comprises 532 residues: Phosphoenolpyruvate carboxykinase (ATP) (532 aa).

Arg60, Tyr194, and Lys200 together coordinate substrate. ATP contacts are provided by residues Lys200, His219, and 237–245; that span reads GLSGTGKTT. Mn(2+) is bound by residues Lys200 and His219. Asp258 is a binding site for Mn(2+). ATP-binding residues include Glu286, Arg324, and Thr449. Arg324 lines the substrate pocket.

The protein belongs to the phosphoenolpyruvate carboxykinase (ATP) family. Requires Mn(2+) as cofactor.

The protein localises to the cytoplasm. The catalysed reaction is oxaloacetate + ATP = phosphoenolpyruvate + ADP + CO2. It participates in carbohydrate biosynthesis; gluconeogenesis. Its function is as follows. Involved in the gluconeogenesis. Catalyzes the conversion of oxaloacetate (OAA) to phosphoenolpyruvate (PEP) through direct phosphoryl transfer between the nucleoside triphosphate and OAA. The protein is Phosphoenolpyruvate carboxykinase (ATP) of Ruegeria sp. (strain TM1040) (Silicibacter sp.).